We begin with the raw amino-acid sequence, 200 residues long: Pyridoxal phosphate homeostasis protein (200 aa).

N6-(pyridoxal phosphate)lysine is present on Lys11.

It belongs to the pyridoxal phosphate-binding protein YggS/PROSC family. Monomer.

In terms of biological role, pyridoxal 5'-phosphate (PLP)-binding protein, which is involved in PLP homeostasis. The polypeptide is Pyridoxal phosphate homeostasis protein (Buchnera aphidicola subsp. Acyrthosiphon pisum (strain APS) (Acyrthosiphon pisum symbiotic bacterium)).